We begin with the raw amino-acid sequence, 410 residues long: Kynureninase (410 aa).

Pyridoxal 5'-phosphate is bound by residues Thr108, Ser109, 135-138, Thr176, Asp205, His208, and Tyr230; that span reads FPTD. Lys231 carries the post-translational modification N6-(pyridoxal phosphate)lysine. The pyridoxal 5'-phosphate site is built by Trp260 and Thr286.

Belongs to the kynureninase family. In terms of assembly, homodimer. Pyridoxal 5'-phosphate is required as a cofactor.

The catalysed reaction is L-kynurenine + H2O = anthranilate + L-alanine + H(+). The enzyme catalyses 3-hydroxy-L-kynurenine + H2O = 3-hydroxyanthranilate + L-alanine + H(+). Its pathway is amino-acid degradation; L-kynurenine degradation; L-alanine and anthranilate from L-kynurenine: step 1/1. It participates in cofactor biosynthesis; NAD(+) biosynthesis; quinolinate from L-kynurenine: step 2/3. Functionally, catalyzes the cleavage of L-kynurenine (L-Kyn) and L-3-hydroxykynurenine (L-3OHKyn) into anthranilic acid (AA) and 3-hydroxyanthranilic acid (3-OHAA), respectively. In Deinococcus radiodurans (strain ATCC 13939 / DSM 20539 / JCM 16871 / CCUG 27074 / LMG 4051 / NBRC 15346 / NCIMB 9279 / VKM B-1422 / R1), this protein is Kynureninase.